Here is a 147-residue protein sequence, read N- to C-terminus: MIAVVQRVTKSSVEVDGKVVGEIRKGVNILLGVAEDDTEEDINKLVNKIVYLRMFEDEDKKMNYSLLDINGEALIISQFTLLANLKKGRRPSFEYAAKPDKAKALYEKFVEEFSKYVKVQTGIFGADMKVYILNDGPVTFILDSKQL.

A Gly-cisPro motif, important for rejection of L-amino acids motif is present at residues 136 to 137; it reads GP.

The protein belongs to the DTD family. As to quaternary structure, homodimer.

The protein localises to the cytoplasm. The enzyme catalyses glycyl-tRNA(Ala) + H2O = tRNA(Ala) + glycine + H(+). The catalysed reaction is a D-aminoacyl-tRNA + H2O = a tRNA + a D-alpha-amino acid + H(+). In terms of biological role, an aminoacyl-tRNA editing enzyme that deacylates mischarged D-aminoacyl-tRNAs. Also deacylates mischarged glycyl-tRNA(Ala), protecting cells against glycine mischarging by AlaRS. Acts via tRNA-based rather than protein-based catalysis; rejects L-amino acids rather than detecting D-amino acids in the active site. By recycling D-aminoacyl-tRNA to D-amino acids and free tRNA molecules, this enzyme counteracts the toxicity associated with the formation of D-aminoacyl-tRNA entities in vivo and helps enforce protein L-homochirality. The chain is D-aminoacyl-tRNA deacylase from Sulfurihydrogenibium sp. (strain YO3AOP1).